A 410-amino-acid polypeptide reads, in one-letter code: Lysosome-associated membrane glycoprotein 2 (410 aa).

The signal sequence occupies residues 1 to 28 (MMCFRLSPVSGSGLVLSCLLLGAVQSYA). The interval 29 to 192 (FELNLPDSKA…SKEEFVCEED (164 aa)) is first lumenal domain. Residues 29–375 (FELNLPDSKA…QDCSADEDNF (347 aa)) lie on the Lumenal side of the membrane. A disulfide bond links cysteine 40 and cysteine 79. 17 N-linked (GlcNAc...) asparagine glycosylation sites follow: asparagine 48, asparagine 58, asparagine 71, asparagine 75, asparagine 99, asparagine 119, asparagine 123, asparagine 179, asparagine 222, asparagine 229, asparagine 242, asparagine 260, asparagine 275, asparagine 300, asparagine 307, asparagine 317, and asparagine 356. Residues cysteine 153 and cysteine 189 are joined by a disulfide bond. A hinge region spans residues 193-228 (KSVTTVRPIIHTTVPPPTTTPTPLPPKVGNYSVSNG). A second lumenal domain region spans residues 229–375 (NATCLLATMG…QDCSADEDNF (147 aa)). Cysteine 232 and cysteine 265 are oxidised to a cystine. A disulfide bond links cysteine 331 and cysteine 368. The helical transmembrane segment at 376–399 (LVPIAVGAALAGVLALVLLAYFIG) threads the bilayer. Residues 400 to 410 (LKRHHTGYEQF) lie on the Cytoplasmic side of the membrane. Residues 401–404 (KRHH) form an important for binding and subsequent lysosomal degradation of target proteins region.

The protein belongs to the LAMP family. In terms of assembly, monomer. Forms large homooligomers. Interacts (via its cytoplasmic region) with HSPA8; HSPA8 mediates recruitment of proteins with a KFERQ motif to the surface of the lysosome for chaperone-mediated autophagy. Interacts with HSP90 in the lysosome lumen; this enhances LAMP2 stability. Interacts with MLLT11. Interacts with ABCB9. Interacts with FURIN. Interacts with CT55; this interaction may be important for LAMP2 protein stability. Interacts with TMEM175; inhibiting the proton channel activity of TMEM175. Forms a ternary complex with RAB7A and RUFY4 (via RUN domain); the interaction with RAB7A is mediated by RUFY4 (via RUN and coiled coil domains). In terms of processing, extensively N-glycosylated. Contains a minor proportion of O-linked glycans.

It is found in the lysosome membrane. The protein resides in the endosome membrane. The protein localises to the cell membrane. Its subcellular location is the cytoplasmic vesicle. It localises to the autophagosome membrane. In terms of biological role, lysosomal membrane glycoprotein which plays an important role in lysosome biogenesis, lysosomal pH regulation and autophagy. Acts as an important regulator of lysosomal lumen pH regulation by acting as a direct inhibitor of the proton channel TMEM175, facilitating lysosomal acidification for optimal hydrolase activity. Plays an important role in chaperone-mediated autophagy, a process that mediates lysosomal degradation of proteins in response to various stresses and as part of the normal turnover of proteins with a long biological half-live. Functions by binding target proteins, such as GAPDH, NLRP3 and MLLT11, and targeting them for lysosomal degradation. In the chaperone-mediated autophagy, acts downstream of chaperones, such as HSPA8/HSC70, which recognize and bind substrate proteins and mediate their recruitment to lysosomes, where target proteins bind LAMP2. Plays a role in lysosomal protein degradation in response to starvation. Required for the fusion of autophagosomes with lysosomes during autophagy. Cells that lack LAMP2 express normal levels of VAMP8, but fail to accumulate STX17 on autophagosomes, which is the most likely explanation for the lack of fusion between autophagosomes and lysosomes. Required for normal degradation of the contents of autophagosomes. Required for efficient MHC class II-mediated presentation of exogenous antigens via its function in lysosomal protein degradation; antigenic peptides generated by proteases in the endosomal/lysosomal compartment are captured by nascent MHC II subunits. Is not required for efficient MHC class II-mediated presentation of endogenous antigens. The sequence is that of Lysosome-associated membrane glycoprotein 2 (LAMP2) from Cricetulus griseus (Chinese hamster).